Consider the following 184-residue polypeptide: Adenylate kinase (184 aa).

12–17 lines the ATP pocket; it reads GAGKGT. Positions 32 to 61 are NMP; sequence STGELLRKEIDLDTDLGKQVKDIMNRGELV. AMP-binding positions include Thr-33, Arg-38, 59-61, 85-88, and Gln-92; these read ELV and GYPR. Positions 126–132 are LID; sequence IRGRKDD. ATP is bound at residue Arg-127. AMP is bound by residues Arg-129 and Arg-140. Gly-168 is a binding site for ATP.

This sequence belongs to the adenylate kinase family. Monomer.

It localises to the cytoplasm. It catalyses the reaction AMP + ATP = 2 ADP. The protein operates within purine metabolism; AMP biosynthesis via salvage pathway; AMP from ADP: step 1/1. In terms of biological role, catalyzes the reversible transfer of the terminal phosphate group between ATP and AMP. Plays an important role in cellular energy homeostasis and in adenine nucleotide metabolism. The chain is Adenylate kinase from Prochlorococcus marinus subsp. pastoris (strain CCMP1986 / NIES-2087 / MED4).